The primary structure comprises 242 residues: Anti-Pycsar protein Apyc1 (242 aa).

Positions 17–216 (FNNNALIEQD…EMQSIIKLMH (200 aa)) are beta-lactamase-like. Residues His59, His61, Asp63, His64, His142, Asp162, and His216 each contribute to the Zn(2+) site.

It belongs to the anti-Pycsar protein Apyc1 family. In terms of assembly, homodimer. Requires Zn(2+) as cofactor.

It carries out the reaction 3',5'-cyclic CMP + H2O = CMP + H(+). It catalyses the reaction 3',5'-cyclic UMP + H2O = UMP + H(+). Its function is as follows. Counteracts the endogenous Pycsar antiviral defense system. Phosphodiesterase that enables metal-dependent hydrolysis of host cyclic nucleotide Pycsar defense signals such as cCMP and cUMP. This Saccharibacillus brassicae protein is Anti-Pycsar protein Apyc1.